Consider the following 620-residue polypeptide: DNA mismatch repair protein MutL (620 aa).

It belongs to the DNA mismatch repair MutL/HexB family.

Its function is as follows. This protein is involved in the repair of mismatches in DNA. It is required for dam-dependent methyl-directed DNA mismatch repair. May act as a 'molecular matchmaker', a protein that promotes the formation of a stable complex between two or more DNA-binding proteins in an ATP-dependent manner without itself being part of a final effector complex. This is DNA mismatch repair protein MutL from Clostridium tetani (strain Massachusetts / E88).